We begin with the raw amino-acid sequence, 286 residues long: ATP synthase gamma chain (286 aa).

This sequence belongs to the ATPase gamma chain family. In terms of assembly, F-type ATPases have 2 components, CF(1) - the catalytic core - and CF(0) - the membrane proton channel. CF(1) has five subunits: alpha(3), beta(3), gamma(1), delta(1), epsilon(1). CF(0) has three main subunits: a, b and c.

The protein resides in the cell inner membrane. Its function is as follows. Produces ATP from ADP in the presence of a proton gradient across the membrane. The gamma chain is believed to be important in regulating ATPase activity and the flow of protons through the CF(0) complex. This Shewanella halifaxensis (strain HAW-EB4) protein is ATP synthase gamma chain.